A 211-amino-acid polypeptide reads, in one-letter code: Flagellar calcium-binding protein (211 aa).

Positions 1–29 are disordered; that stretch reads MGACGSKGSTSDKGLASDKDGKKAKDRKE. Basic and acidic residues predominate over residues 15-29; the sequence is LASDKDGKKAKDRKE. EF-hand domains are found at residues 45 to 80, 81 to 116, 127 to 162, and 164 to 199; these read EAKQ…VLKL, DEFT…FVEF, YDFF…LEAW, and AKVE…VKLD. Positions 58, 60, 62, 64, and 69 each coordinate Ca(2+). 9 residues coordinate Ca(2+): aspartate 140, serine 142, asparagine 144, glutamate 151, aspartate 177, asparagine 179, threonine 181, serine 183, and glutamate 188.

It belongs to the calflagin family.

The protein resides in the cell projection. It is found in the cilium. The protein localises to the flagellum. In terms of biological role, may contribute to the rapid motility of the trypanosomes, playing a role either in flagellar structure or in calcium metabolism. Could alternate between a GDP-bound inactive form to a calcium/GTP-bound active form. This Trypanosoma cruzi protein is Flagellar calcium-binding protein (FCABP).